A 1780-amino-acid chain; its full sequence is Callose synthase 12 (1780 aa).

The Cytoplasmic segment spans residues methionine 1–arginine 302. The chain crosses the membrane as a helical span at residues serine 303–tryptophan 323. Topologically, residues glutamate 324–arginine 348 are extracellular. The helical transmembrane segment at leucine 349–alanine 369 threads the bilayer. Topologically, residues serine 370–methionine 386 are cytoplasmic. The helical transmembrane segment at leucine 387–isoleucine 407 threads the bilayer. Over tryptophan 408–glutamine 427 the chain is Extracellular. The chain crosses the membrane as a helical span at residues phenylalanine 428–isoleucine 448. The Cytoplasmic portion of the chain corresponds to proline 449 to lysine 489. A helical transmembrane segment spans residues tyrosine 490–valine 510. Residues lysine 511 to valine 542 are Extracellular-facing. Residues alanine 543–isoleucine 563 form a helical membrane-spanning segment. The Cytoplasmic segment spans residues tyrosine 564 to threonine 1348. Residues threonine 1349–glycine 1369 form a helical membrane-spanning segment. Residues arginine 1370 to glycine 1394 are Extracellular-facing. A helical membrane pass occupies residues valine 1395–valine 1415. The Cytoplasmic segment spans residues glutamate 1416 to glutamate 1421. The helical transmembrane segment at glycine 1422–tyrosine 1442 threads the bilayer. Residues threonine 1443 to histidine 1489 lie on the Extracellular side of the membrane. A helical membrane pass occupies residues phenylalanine 1490–alanine 1510. The Cytoplasmic segment spans residues lysine 1511–tyrosine 1516. A helical transmembrane segment spans residues isoleucine 1517 to phenylalanine 1537. Over asparagine 1538 to lysine 1588 the chain is Extracellular. The chain crosses the membrane as a helical span at residues alanine 1589–valine 1609. At tyrosine 1610–serine 1620 the chain is on the cytoplasmic side. The helical transmembrane segment at leucine 1621 to isoleucine 1641 threads the bilayer. At glutamine 1642–arginine 1657 the chain is on the extracellular side. Residues leucine 1658–threonine 1678 form a helical membrane-spanning segment. Residues histidine 1679–serine 1681 lie on the Cytoplasmic side of the membrane. A helical transmembrane segment spans residues phenylalanine 1682 to isoleucine 1702. At alanine 1703–aspartate 1728 the chain is on the extracellular side. The N-linked (GlcNAc...) asparagine glycan is linked to asparagine 1712. A helical transmembrane segment spans residues isoleucine 1729–glutamine 1749. Residues serine 1750–valine 1780 lie on the Cytoplasmic side of the membrane.

Belongs to the glycosyltransferase 48 family. Highly expressed in flowers. Expressed at low levels in roots, leaves, stems, cauline leaves and siliques.

The protein resides in the cell membrane. The catalysed reaction is [(1-&gt;3)-beta-D-glucosyl](n) + UDP-alpha-D-glucose = [(1-&gt;3)-beta-D-glucosyl](n+1) + UDP + H(+). Its function is as follows. Involved in sporophytic and gametophytic development. Required for normal leaf development. During pollen formation, required for the formation of the callose wall separating the tetraspores of the tetrad (interstitial wall), but not for the callose wall surrounding the pollen mother cells (peripheral wall). Functionally redudant to CALS11 (GSL1). May play a role later in pollen grain maturation. Required for callose formation induced by wounding and pathogen attack. May interfere with salicylic acid-induced signaling pathway during defense response. During plant growth and development, callose is found as a transitory component of the cell plate in dividing cells, is a major component of pollen mother cell walls and pollen tubes, and is found as a structural component of plasmodesmatal canals. The chain is Callose synthase 12 (CALS12) from Arabidopsis thaliana (Mouse-ear cress).